We begin with the raw amino-acid sequence, 597 residues long: MERPAPLAVLPFSDPAHALSLLRGLSQLRAERKFLDVTLEAAGGRDFPAHRAVLAAASPYFRAMFAGQLRESRAERVRLHGVPPDMLQLLLDFSYTGRVAVSGDNAEPLLRAADLLQFPAVKEACGAFLQQQLDLANCLDMQDFAEAFSCSGLASAAQRFILRHVGELGAEQLERLPLARLLRYLRDDGLCVPKEEAAYQLALRWVRADPPRRAAHWPQLLEAVRLPFVRRFYLLAHVEAEPLVARCPPCLRLLREARDFQAARYDRHDRGPCPRMRPRPSTGLAEILVLVGGCDQDCDELVTVDCYNPQTGQWRYLAEFPDHLGGGYSIVALGNDIYVTGGSDGSRLYDCVWRYNSSVNEWTEVAPMLKAREYHSSSVLNGLLYVVAADSTERYDHATDSWEALQPMTYPMDNCSTTACRGRLYAIGSLAGKETMVIQCYDPDTDLWSMVNCGQLPPWSFAPKTVTLNGLMYFVRDDSAEVDVYNPTKDEWDKIPSMNQVHVGGSLAALGGKLYVSGGYDNTFELSDVVEAYDPETRAWSVVGRLPEPTFWHGSVSIFRQFMPQTPAGGRGFELNSGSSDVDAGHHRLPQNPEELQ.

A BTB domain is found at 35–103; it reads LDVTLEAAGG…SYTGRVAVSG (69 aa). In terms of domain architecture, BACK spans 138-239; the sequence is CLDMQDFAEA…RRFYLLAHVE (102 aa). Kelch repeat units lie at residues 287–335, 336–382, 384–422, 423–470, 472–512, and 513–560; these read ILVL…ALGN, DIYV…VLNG, LYVV…ACRG, RLYA…TLNG, MYFV…ALGG, and KLYV…SIFR. The disordered stretch occupies residues 570–597; it reads GRGFELNSGSSDVDAGHHRLPQNPEELQ.

In terms of assembly, component of the BCR(KLHL21) E3 ubiquitin ligase complex, at least composed of CUL3, KLHL21 and RBX1.

The protein localises to the cytoplasm. Its subcellular location is the cytoskeleton. It localises to the spindle. It functions in the pathway protein modification; protein ubiquitination. Functionally, substrate-specific adapter of BCR (BTB-CUL3-RBX1) E3 ubiquitin-protein ligase complex required for efficient chromosome alignment and cytokinesis. The BCR(KLHL21) E3 ubiquitin ligase complex regulates localization of the chromosomal passenger complex (CPC) from chromosomes to the spindle midzone in anaphase and mediates the ubiquitination of AURKB. Ubiquitination of AURKB by BCR(KLHL21) E3 ubiquitin ligase complex may not lead to its degradation by the proteasome. This chain is Kelch-like protein 21 (Klhl21), found in Rattus norvegicus (Rat).